The following is a 200-amino-acid chain: Ras-related protein RABF2a (200 aa).

17–25 (GDVGAGKSS) serves as a coordination point for GTP. The short motif at 39–47 (QESTIGAAF) is the Effector region element. Residues 65 to 69 (DTAGQ), 123 to 126 (NKAD), and 153 to 154 (SA) each bind GTP. S-geranylgeranyl cysteine attachment occurs at residues Cys-198 and Cys-199.

The protein belongs to the small GTPase superfamily. Rab family. As to quaternary structure, interacts with VPS9A. Interacts with EREX (via PX domain). Binds to VPS3. In terms of tissue distribution, high in stem, root, and inflorescence.

It is found in the endosome membrane. Its subcellular location is the prevacuolar compartment membrane. Functionally, involved in the trafficking of soluble cargo proteins from the prevacuolar compartment to the central vacuole. Involved in vacuolar transport of storage proteins with EREX as effector. Regulates membrane trafficking to protein storage vacuoles (PSVs). This Arabidopsis thaliana (Mouse-ear cress) protein is Ras-related protein RABF2a (RABF2A).